Reading from the N-terminus, the 57-residue chain is UPF0057 membrane protein T23F2.3 (57 aa).

A run of 2 helical transmembrane segments spans residues T4 to L24 and I36 to A56.

It belongs to the UPF0057 (PMP3) family.

It is found in the membrane. This is UPF0057 membrane protein T23F2.3 from Caenorhabditis elegans.